A 349-amino-acid polypeptide reads, in one-letter code: tRNA pseudouridine synthase D (349 aa).

Residue Phe-27 coordinates substrate. Asp-80 acts as the Nucleophile in catalysis. Asn-129 contributes to the substrate binding site. Residues 155 to 303 enclose the TRUD domain; sequence GVPNYFGAQR…VEAARRAMLL (149 aa). Phe-329 serves as a coordination point for substrate.

It belongs to the pseudouridine synthase TruD family.

It carries out the reaction uridine(13) in tRNA = pseudouridine(13) in tRNA. Responsible for synthesis of pseudouridine from uracil-13 in transfer RNAs. In Escherichia coli O127:H6 (strain E2348/69 / EPEC), this protein is tRNA pseudouridine synthase D.